Reading from the N-terminus, the 255-residue chain is 3-dehydroquinate dehydratase (255 aa).

3-dehydroquinate-binding positions include 47–49 and arginine 83; that span reads EWR. Histidine 145 acts as the Proton donor/acceptor in catalysis. The active-site Schiff-base intermediate with substrate is the lysine 172. 3-dehydroquinate is bound by residues arginine 215, serine 234, and glutamine 238.

Belongs to the type-I 3-dehydroquinase family. As to quaternary structure, homodimer.

The enzyme catalyses 3-dehydroquinate = 3-dehydroshikimate + H2O. The protein operates within metabolic intermediate biosynthesis; chorismate biosynthesis; chorismate from D-erythrose 4-phosphate and phosphoenolpyruvate: step 3/7. Its function is as follows. Involved in the third step of the chorismate pathway, which leads to the biosynthesis of aromatic amino acids. Catalyzes the cis-dehydration of 3-dehydroquinate (DHQ) and introduces the first double bond of the aromatic ring to yield 3-dehydroshikimate. This chain is 3-dehydroquinate dehydratase, found in Clostridium kluyveri (strain NBRC 12016).